A 103-amino-acid polypeptide reads, in one-letter code: Large ribosomal subunit protein bL21 (103 aa).

This sequence belongs to the bacterial ribosomal protein bL21 family. Part of the 50S ribosomal subunit. Contacts protein L20.

Functionally, this protein binds to 23S rRNA in the presence of protein L20. The chain is Large ribosomal subunit protein bL21 from Haemophilus influenzae (strain PittEE).